Consider the following 93-residue polypeptide: Small ribosomal subunit protein uS19m (93 aa).

Belongs to the universal ribosomal protein uS19 family. Component of the mitochondrial small ribosomal subunit (mt-SSU). Mature yeast 74S mitochondrial ribosomes consist of a small (37S) and a large (54S) subunit. The 37S small subunit contains a 15S ribosomal RNA (15S mt-rRNA) and at least 32 different proteins. The 54S large subunit contains a 21S rRNA (21S mt-rRNA) and at least 45 different proteins.

The protein localises to the mitochondrion. In terms of biological role, component of the mitochondrial ribosome (mitoribosome), a dedicated translation machinery responsible for the synthesis of mitochondrial genome-encoded proteins, including at least some of the essential transmembrane subunits of the mitochondrial respiratory chain. The mitoribosomes are attached to the mitochondrial inner membrane and translation products are cotranslationally integrated into the membrane. This Schizosaccharomyces pombe (strain 972 / ATCC 24843) (Fission yeast) protein is Small ribosomal subunit protein uS19m (rsm19).